The following is a 242-amino-acid chain: MKRSKTLRAADAKVDREKLYAPLEAVRLAKETSTTKFDGTVEVAFRLGVDPRKADQMVRGTVNLPHGTGKTARVLVFATGDRAAAAEAAGADIVGDDELINEIAKGNRLNEFDAVVATPDLMGKVGRLGRVLGPRGLMPNPKTGTVTMDVAKAVTEIKGGKIEFRVDKHSNLHFIIGKVSFTDEQLVENYGAALDEILRLKPSAAKGRYIKKAALSTTMGPGIHLDSNRTRNLLVEEDPAAV.

Belongs to the universal ribosomal protein uL1 family. Part of the 50S ribosomal subunit.

In terms of biological role, binds directly to 23S rRNA. The L1 stalk is quite mobile in the ribosome, and is involved in E site tRNA release. Its function is as follows. Protein L1 is also a translational repressor protein, it controls the translation of the L11 operon by binding to its mRNA. The sequence is that of Large ribosomal subunit protein uL1 from Streptomyces virginiae (Streptomyces cinnamonensis).